A 213-amino-acid polypeptide reads, in one-letter code: Ras-related protein Rab-39B (213 aa).

GTP-binding residues include S17, G20, K21, S22, C23, S37, and T40. Mg(2+) is bound at residue S22. The switch-I stretch occupies residues 35–43 (QVSDPTVGV). Mg(2+) contacts are provided by T40 and D64. GTP-binding residues include G67, H123, K124, D126, A154, and R155. Positions 67–83 (GQERFRSITRAYYRNSV) are switch-II. S201 carries the post-translational modification Phosphoserine. Residues C211 and C213 are each lipidated (S-geranylgeranyl cysteine). C213 bears the Cysteine methyl ester mark.

It belongs to the small GTPase superfamily. Rab family. As to quaternary structure, interacts (GDP-bound) with C9orf72; C9orf72 in complex with SMCR8 acts as a GEF for RAB39B. Interacts (in GTP-bound form) with PICK1 (via PDZ domain); a PICK1 homodimer may allow simultaneous association of RAB39B and GRIA2 to PICK1 which is involved in GRIA2 trafficking. Interacts with isoform c of RASSF1; the interaction is strong. Interacts with isoform a of RASSF1; the interaction is weak. Interacts with the DLG4/PSD-95. Interacts (GTP-bound) with HOPS complex components VPS39 and VPS41. Mg(2+) serves as cofactor. Highly expressed in the brain.

It localises to the cell membrane. Its subcellular location is the cytoplasmic vesicle membrane. It is found in the golgi apparatus. The protein resides in the cytoplasmic vesicle. The protein localises to the autophagosome membrane. It localises to the autolysosome membrane. It catalyses the reaction GTP + H2O = GDP + phosphate + H(+). Its activity is regulated as follows. Regulated by guanine nucleotide exchange factors (GEFs) including C9orf72-SMCR8 complex, which promote the exchange of bound GDP for free GTP. Regulated by GTPase activating proteins (GAPs) which increase the GTP hydrolysis activity. Inhibited by GDP dissociation inhibitors (GDIs). The small GTPases Rab are key regulators of intracellular membrane trafficking, from the formation of transport vesicles to their fusion with membranes. Rabs cycle between an inactive GDP-bound form and an active GTP-bound form that is able to recruit to membranes different sets of downstream effectors directly responsible for vesicle formation, movement, tethering and fusion. RAB39B is involved in autophagy and may function in autophagosome formation. Binds downstream effector PICK1 to ensure selectively GRIA2 exit from the endoplasmic reticulum to the Golgi and to regulate AMPAR composition at the post-synapses and thus synaptic transmission. May regulate the homeostasis of SNCA/alpha-synuclein. This is Ras-related protein Rab-39B from Homo sapiens (Human).